A 908-amino-acid polypeptide reads, in one-letter code: Zinc finger and BTB domain-containing protein 41 (908 aa).

The interval 38–59 (TQAPERPTPEAAQRCQELPPSP) is disordered. The region spanning 89–153 (CDLLIIVEGK…LYTSEFFVYK (65 aa)) is the BTB domain. The C2H2-type 1 zinc finger occupies 208-231 (HQCKFCSRHFCYKKSLENHLAKTH). The segment covering 252 to 261 (RRSKRNRKCP) has biased composition (basic residues). The tract at residues 252-344 (RRSKRNRKCP…EAGDSAGSIH (93 aa)) is disordered. The span at 267-276 (TSDDEQESGD) shows a compositional bias: acidic residues. Basic and acidic residues predominate over residues 279-296 (DNLHQESSEKERSDRNDS). Residues 297-336 (EDPGSEYNAEDEELEEEVSDEDSDTEQSDKDNDAEEEPEA) show a composition bias toward acidic residues. C2H2-type zinc fingers lie at residues 360 to 382 (LQCP…TRVH), 388 to 410 (FECD…RKKH), 421 to 444 (HKCP…KRFH), 462 to 484 (WKCD…MILH), 490 to 513 (FKCT…EKFH), 517 to 540 (FPCD…ECTH), 546 to 568 (WTCF…LRIH), 574 to 596 (HLCS…LRVH), 602 to 624 (YECD…KKIH), 630 to 653 (HQCE…KSVH), 667 to 689 (HQCD…FRTH), 695 to 717 (YKCQ…LVIH), and 723 to 746 (FNCQ…DHVH).

The protein resides in the nucleus. May be involved in transcriptional regulation. This chain is Zinc finger and BTB domain-containing protein 41 (Zbtb41), found in Mus musculus (Mouse).